The chain runs to 289 residues: Somatostatin-like receptor F_48D10.1 (289 aa).

Topologically, residues 1–57 are extracellular; it reads MEPLDQTPGFPLSPEPNYWYETTPSLLLVSYPHLLDISSNQSTQSVPFQGSSALLTA. Asn-40 carries an N-linked (GlcNAc...) asparagine glycan. A helical transmembrane segment spans residues 58–79; sequence VIYITVFVVGLTGNTLAIYVVL. Residues 80–89 lie on the Cytoplasmic side of the membrane; the sequence is RYAGMKTVTN. The chain crosses the membrane as a helical span at residues 90–110; that stretch reads IYILNLAVADELYIVGLPFLA. Topologically, residues 111-126 are extracellular; that stretch reads TQNVLSYWPFGSFLCR. A disulfide bridge links Cys-125 with Cys-221. The helical transmembrane segment at 127–148 threads the bilayer; it reads VVMTADSMNQFTSIFCLTVMSI. Residues 149-170 lie on the Cytoplasmic side of the membrane; the sequence is DRYLAVVHPIRSTKWRHPRVAK. Residues 171–191 form a helical membrane-spanning segment; sequence VVSAAVWAVSFVVVLPVVIFS. The Extracellular portion of the chain corresponds to 192–240; sequence DVQVRPSRPLQVGTSSKCLVKRVQETFNSCNMIWPEPKNVWSTAFILYT. Residues 241–261 form a helical membrane-spanning segment; the sequence is AMVGFFGPLLIICLCYLLIVI. Topologically, residues 262–289 are cytoplasmic; it reads KVRHRMSAAQVGAVVSTCPLNICCLSRR.

It belongs to the G-protein coupled receptor 1 family.

It is found in the cell membrane. The polypeptide is Somatostatin-like receptor F_48D10.1 (Takifugu rubripes (Japanese pufferfish)).